We begin with the raw amino-acid sequence, 341 residues long: Anthranilate phosphoribosyltransferase (341 aa).

5-phospho-alpha-D-ribose 1-diphosphate is bound by residues glycine 84, 94–97, 112–120, and serine 124; these read NVST and KHGGRAASS. Glycine 84 lines the anthranilate pocket. Serine 96 provides a ligand contact to Mg(2+). Arginine 170 lines the anthranilate pocket. Mg(2+) contacts are provided by aspartate 229 and glutamate 230.

It belongs to the anthranilate phosphoribosyltransferase family. As to quaternary structure, homodimer. Mg(2+) is required as a cofactor.

The enzyme catalyses N-(5-phospho-beta-D-ribosyl)anthranilate + diphosphate = 5-phospho-alpha-D-ribose 1-diphosphate + anthranilate. The protein operates within amino-acid biosynthesis; L-tryptophan biosynthesis; L-tryptophan from chorismate: step 2/5. In terms of biological role, catalyzes the transfer of the phosphoribosyl group of 5-phosphorylribose-1-pyrophosphate (PRPP) to anthranilate to yield N-(5'-phosphoribosyl)-anthranilate (PRA). The chain is Anthranilate phosphoribosyltransferase from Methylobacillus flagellatus (strain ATCC 51484 / DSM 6875 / VKM B-1610 / KT).